The primary structure comprises 400 residues: Methylthioribose kinase (400 aa).

Residues Asn-40, Lys-57, and 111–113 each bind ATP; that span reads EDL. Asp-229 is a substrate binding site. 246 to 248 contacts ATP; that stretch reads DAE. Substrate is bound at residue Arg-344.

Belongs to the methylthioribose kinase family. In terms of assembly, homodimer.

The catalysed reaction is 5-(methylsulfanyl)-D-ribose + ATP = 5-(methylsulfanyl)-alpha-D-ribose 1-phosphate + ADP + H(+). It functions in the pathway amino-acid biosynthesis; L-methionine biosynthesis via salvage pathway; S-methyl-5-thio-alpha-D-ribose 1-phosphate from S-methyl-5'-thioadenosine (hydrolase route): step 2/2. Catalyzes the phosphorylation of methylthioribose into methylthioribose-1-phosphate. The chain is Methylthioribose kinase from Pectobacterium carotovorum subsp. carotovorum (strain PC1).